The chain runs to 202 residues: Holliday junction branch migration complex subunit RuvA (202 aa).

The segment at 1–65 (MIAYVEGRLA…EDALELYGFA (65 aa)) is domain I. A domain II region spans residues 66–144 (TWDERQTFIV…VEDLPAAAPL (79 aa)). A flexible linker region spans residues 145–155 (VTGGAPGGVFR). The domain III stretch occupies residues 155 to 202 (RDALAGLANLGYGEEEASHVLKEVLHGEPDLDVGGALRAALRALARGR).

This sequence belongs to the RuvA family. In terms of assembly, homotetramer. Forms an RuvA(8)-RuvB(12)-Holliday junction (HJ) complex. HJ DNA is sandwiched between 2 RuvA tetramers; dsDNA enters through RuvA and exits via RuvB. An RuvB hexamer assembles on each DNA strand where it exits the tetramer. Each RuvB hexamer is contacted by two RuvA subunits (via domain III) on 2 adjacent RuvB subunits; this complex drives branch migration. In the full resolvosome a probable DNA-RuvA(4)-RuvB(12)-RuvC(2) complex forms which resolves the HJ.

It localises to the cytoplasm. Its function is as follows. The RuvA-RuvB-RuvC complex processes Holliday junction (HJ) DNA during genetic recombination and DNA repair, while the RuvA-RuvB complex plays an important role in the rescue of blocked DNA replication forks via replication fork reversal (RFR). RuvA specifically binds to HJ cruciform DNA, conferring on it an open structure. The RuvB hexamer acts as an ATP-dependent pump, pulling dsDNA into and through the RuvAB complex. HJ branch migration allows RuvC to scan DNA until it finds its consensus sequence, where it cleaves and resolves the cruciform DNA. This Nitratidesulfovibrio vulgaris (strain DP4) (Desulfovibrio vulgaris) protein is Holliday junction branch migration complex subunit RuvA.